The chain runs to 361 residues: MKPSIHSLTHQTMQEWVLEQGEKKFRADQIWEWLYRKRVQSFEEMTNLSKDLIAKLNDQFVVNPLKQRIVQESADGTVKYLFELPDGMLIETVLMRQHYGLSVCVTTQVGCNIGCTFCASGLIKKQRDLNNGEIVAQIMLVQKYFDERGQDERVSHIVVMGIGEPFDNYNNVLNFFRTINDDKGMAIGARHITVSTLGLAHKIRDFADEGVQVNLAVSLHAPNNELRSSIMKINRAFPIEKLFAAIEYYIETTNRRVTFEYIMLNEVNDGVEQALELAELLKNIKKLSYVNLISYNPVSEHDQYSRSPKERVLAFYDTLKKKGGNCVVRQEHGTDIDAACGQLRSNTMKRDRQKAVAAVNP.

The Proton acceptor role is filled by glutamate 91. One can recognise a Radical SAM core domain in the interval glutamine 97–arginine 329. The cysteines at positions 104 and 340 are disulfide-linked. The [4Fe-4S] cluster site is built by cysteine 111, cysteine 115, and cysteine 118. S-adenosyl-L-methionine is bound by residues glycine 163–glutamate 164, serine 195, serine 218–histidine 220, and asparagine 296. Cysteine 340 (S-methylcysteine intermediate) is an active-site residue.

Belongs to the radical SAM superfamily. RlmN family. Requires [4Fe-4S] cluster as cofactor.

It localises to the cytoplasm. The enzyme catalyses adenosine(2503) in 23S rRNA + 2 reduced [2Fe-2S]-[ferredoxin] + 2 S-adenosyl-L-methionine = 2-methyladenosine(2503) in 23S rRNA + 5'-deoxyadenosine + L-methionine + 2 oxidized [2Fe-2S]-[ferredoxin] + S-adenosyl-L-homocysteine. It carries out the reaction adenosine(37) in tRNA + 2 reduced [2Fe-2S]-[ferredoxin] + 2 S-adenosyl-L-methionine = 2-methyladenosine(37) in tRNA + 5'-deoxyadenosine + L-methionine + 2 oxidized [2Fe-2S]-[ferredoxin] + S-adenosyl-L-homocysteine. In terms of biological role, specifically methylates position 2 of adenine 2503 in 23S rRNA and position 2 of adenine 37 in tRNAs. The chain is Probable dual-specificity RNA methyltransferase RlmN from Streptococcus pneumoniae (strain Hungary19A-6).